Reading from the N-terminus, the 198-residue chain is CXXC-type zinc finger protein 4 (198 aa).

Positions 114–134 (NHSSSSSSSSGGAGGANPAKK) are disordered. The segment at 132–173 (AKKKRKRCGVCVPCKRLINCGVCSSCRNRKTGHQICKFRKCE) adopts a CXXC-type zinc-finger fold. 6 residues coordinate Zn(2+): Cys-139, Cys-142, Cys-145, Cys-151, Cys-154, and Cys-157. An interaction with DVL1 region spans residues 161 to 166 (KTGHQI). Zn(2+) is bound by residues Cys-167 and Cys-172.

As to quaternary structure, interacts with the PDZ domain of DVL1.

The protein resides in the cytoplasm. Functionally, acts as a negative regulator of the Wnt signaling pathway via its interaction with DVL1. Binds preferentially to DNA containing cytidine-phosphate-guanosine (CpG) dinucleotides over CpH (H=A, T, and C), hemimethylated-CpG and hemimethylated-hydroxymethyl-CpG. In Homo sapiens (Human), this protein is CXXC-type zinc finger protein 4 (CXXC4).